The following is a 294-amino-acid chain: 33 kDa chaperonin (294 aa).

Disulfide bonds link C239/C241 and C272/C275.

The protein belongs to the HSP33 family. In terms of processing, under oxidizing conditions two disulfide bonds are formed involving the reactive cysteines. Under reducing conditions zinc is bound to the reactive cysteines and the protein is inactive.

It is found in the cytoplasm. Functionally, redox regulated molecular chaperone. Protects both thermally unfolding and oxidatively damaged proteins from irreversible aggregation. Plays an important role in the bacterial defense system toward oxidative stress. This Lacticaseibacillus paracasei (strain ATCC 334 / BCRC 17002 / CCUG 31169 / CIP 107868 / KCTC 3260 / NRRL B-441) (Lactobacillus paracasei) protein is 33 kDa chaperonin.